Here is a 159-residue protein sequence, read N- to C-terminus: MPELKIKTEKVEKQLTKEPLVLKTPKEKIDNLGKFYATGKRKNAIARVWLKVGKGKIVVNKKTIAQYFPSETYVKTILQPFVLTKTIDQYDIICTVRGGGISGQKGAILHGISKALDKSAPDFRAILRKGGLLTRDSRVVERKKYGQRKARKKTQFSKR.

Belongs to the universal ribosomal protein uS9 family.

The polypeptide is Small ribosomal subunit protein uS9 (Rickettsia rickettsii (strain Iowa)).